Here is a 227-residue protein sequence, read N- to C-terminus: Ribosomal RNA small subunit methyltransferase G (227 aa).

S-adenosyl-L-methionine-binding positions include Gly74, Leu79, 124–125 (AE), and Arg142.

This sequence belongs to the methyltransferase superfamily. RNA methyltransferase RsmG family.

The protein localises to the cytoplasm. Functionally, specifically methylates the N7 position of guanine in position 518 of 16S rRNA. This chain is Ribosomal RNA small subunit methyltransferase G, found in Mycolicibacterium vanbaalenii (strain DSM 7251 / JCM 13017 / BCRC 16820 / KCTC 9966 / NRRL B-24157 / PYR-1) (Mycobacterium vanbaalenii).